We begin with the raw amino-acid sequence, 1003 residues long: Alpha-1,4 glucan phosphorylase L isozyme, chloroplastic/amyloplastic (1003 aa).

The transit peptide at 1–64 directs the protein to the chloroplast; the sequence is MASMTMRFHP…RRRSAFSVKC (64 aa). 2 disordered regions span residues 71-91 and 526-593; these read KQKV…SSFA and SSEE…KKLP. Positions 537 to 553 are enriched in acidic residues; the sequence is GEEEETSKEGGEEEEEK. Residues 569–580 show a composition bias toward basic and acidic residues; sequence EVEKAIAEKDGT. The residue at position 849 (K849) is an N6-(pyridoxal phosphate)lysine.

This sequence belongs to the glycogen phosphorylase family. It depends on pyridoxal 5'-phosphate as a cofactor. In terms of tissue distribution, found predominantly in cotyledons and early seed coat.

It localises to the plastid. Its subcellular location is the chloroplast. The protein localises to the amyloplast. It carries out the reaction [(1-&gt;4)-alpha-D-glucosyl](n) + phosphate = [(1-&gt;4)-alpha-D-glucosyl](n-1) + alpha-D-glucose 1-phosphate. Phosphorylase is an important allosteric enzyme in carbohydrate metabolism. Enzymes from different sources differ in their regulatory mechanisms and in their natural substrates. However, all known phosphorylases share catalytic and structural properties. Functionally, the L isoform exhibits higher affinity for unbranched substrates such as glucan-like amylose and maltodextrin. This chain is Alpha-1,4 glucan phosphorylase L isozyme, chloroplastic/amyloplastic (PHO1), found in Vicia faba (Broad bean).